Consider the following 63-residue polypeptide: Conotoxin Pu5.4 (63 aa).

An N-terminal signal peptide occupies residues methionine 1–alanine 22. Positions threonine 23–arginine 50 are excised as a propeptide. Position 62 is a tryptophan amide (tryptophan 62).

The protein belongs to the conotoxin T superfamily. Post-translationally, contains 2 disulfide bonds that can be either 'C1-C3, C2-C4' or 'C1-C4, C2-C3', since these disulfide connectivities have been observed for conotoxins with cysteine framework V (for examples, see AC P0DQQ7 and AC P81755). As to expression, expressed by the venom duct.

It is found in the secreted. The chain is Conotoxin Pu5.4 from Conus pulicarius (Flea-bitten cone).